Reading from the N-terminus, the 169-residue chain is Chorismate pyruvate-lyase (169 aa).

Met-37, Arg-79, Leu-117, and Glu-158 together coordinate substrate.

It belongs to the UbiC family. In terms of assembly, monomer.

It localises to the cytoplasm. The enzyme catalyses chorismate = 4-hydroxybenzoate + pyruvate. It participates in cofactor biosynthesis; ubiquinone biosynthesis. In terms of biological role, removes the pyruvyl group from chorismate, with concomitant aromatization of the ring, to provide 4-hydroxybenzoate (4HB) for the ubiquinone pathway. The protein is Chorismate pyruvate-lyase of Proteus mirabilis (strain HI4320).